A 227-amino-acid chain; its full sequence is 7-cyano-7-deazaguanine synthase (227 aa).

8–18 (LSGGTDSATVL) contacts ATP. Residues Cys-192, Cys-202, Cys-205, and Cys-208 each contribute to the Zn(2+) site.

This sequence belongs to the QueC family. Zn(2+) is required as a cofactor.

The enzyme catalyses 7-carboxy-7-deazaguanine + NH4(+) + ATP = 7-cyano-7-deazaguanine + ADP + phosphate + H2O + H(+). Its pathway is purine metabolism; 7-cyano-7-deazaguanine biosynthesis. In terms of biological role, catalyzes the ATP-dependent conversion of 7-carboxy-7-deazaguanine (CDG) to 7-cyano-7-deazaguanine (preQ(0)). The sequence is that of 7-cyano-7-deazaguanine synthase from Rickettsia prowazekii (strain Madrid E).